The chain runs to 208 residues: Thymidylate kinase (208 aa).

11 to 18 serves as a coordination point for ATP; it reads GGEGVGKS.

The protein belongs to the thymidylate kinase family.

The enzyme catalyses dTMP + ATP = dTDP + ADP. Its function is as follows. Phosphorylation of dTMP to form dTDP in both de novo and salvage pathways of dTTP synthesis. This chain is Thymidylate kinase, found in Methylococcus capsulatus (strain ATCC 33009 / NCIMB 11132 / Bath).